Consider the following 252-residue polypeptide: NAP1-related protein 2 (252 aa).

Basic and acidic residues predominate over residues 1–15 (MTAPADKGKKAKTDA). The disordered stretch occupies residues 1–23 (MTAPADKGKKAKTDADGGAAEEN). Residues 26 to 67 (IDGALVLSIEKLQEIQDELEKVNEEASDKVLEVEQKYSEIRR) adopt a coiled-coil conformation. The tract at residues 222–252 (YFNNEAEELGEDDDEEGSDADEGEEDEEEEN) is disordered. The segment covering 226–252 (EAEELGEDDDEEGSDADEGEEDEEEEN) has biased composition (acidic residues).

The protein belongs to the nucleosome assembly protein (NAP) family.

It localises to the nucleus. The protein resides in the cytoplasm. Functionally, acts as a histone H2A/H2B chaperone in nucleosome assembly. This Oryza sativa subsp. indica (Rice) protein is NAP1-related protein 2.